The chain runs to 309 residues: Mitochondrial import receptor subunit TOM34 (309 aa).

Ser8 bears the Phosphoserine mark. TPR repeat units follow at residues 9–42 (VEQL…LQAR), 51–84 (SVLY…VPFS), and 85–118 (IKPL…DNSV). Residues 158-189 (WNSLPSDNHKETAKTKSKEATATKSRVPSAGD) form a disordered region. Position 160 is a phosphoserine (Ser160). The span at 164–178 (DNHKETAKTKSKEAT) shows a compositional bias: basic and acidic residues. Ser186 carries the phosphoserine modification. 3 TPR repeats span residues 193-226 (AKAL…SSLE), 227-260 (SATY…DGKN), and 261-294 (VKAF…EPRN). Residue Lys197 forms a Glycyl lysine isopeptide (Lys-Gly) (interchain with G-Cter in SUMO2) linkage.

It belongs to the Tom34 family. In terms of assembly, interacts with HSP90A, VCP, ATP6V1D, KIAA0665, AMPK, and DMAP1 through its TPR repeat. In terms of tissue distribution, isoform 1 is ubiquitously expressed while isoform 2 is expressed only in mature testicular germ cells. Isoform 1 is expressed in all testicular cells. Isoform 2 is highly expressed in early to late pachytene cells but expression is significantly decreased in round spermatid cells.

The protein resides in the cytoplasm. It localises to the mitochondrion outer membrane. In terms of biological role, plays a role in the import of cytosolically synthesized preproteins into mitochondria. Binds the mature portion of precursor proteins. Interacts with cellular components, and possesses weak ATPase activity. May be a chaperone-like protein that helps to keep newly synthesized precursors in an unfolded import compatible state. The protein is Mitochondrial import receptor subunit TOM34 (Tomm34) of Mus musculus (Mouse).